The primary structure comprises 341 residues: GTPase Obg (341 aa).

Residues 1–159 enclose the Obg domain; sequence MKFVDEALIK…RNLRLELRVL (159 aa). Residues 128–150 are disordered; it reads TRYKSSVNRSPRQTTPGSPGESR. Residues 129 to 144 show a composition bias toward polar residues; sequence RYKSSVNRSPRQTTPG. In terms of domain architecture, OBG-type G spans 160–334; it reads ADVGLLGLPN…LCYALMQLID (175 aa). GTP-binding positions include 166-173, 191-195, 213-216, 283-286, and 315-317; these read GLPNAGKS, FTTLH, DIPG, NKID, and SAI. Mg(2+)-binding residues include serine 173 and threonine 193.

Belongs to the TRAFAC class OBG-HflX-like GTPase superfamily. OBG GTPase family. Monomer. Mg(2+) is required as a cofactor.

Its subcellular location is the cytoplasm. Functionally, an essential GTPase which binds GTP, GDP and possibly (p)ppGpp with moderate affinity, with high nucleotide exchange rates and a fairly low GTP hydrolysis rate. Plays a role in control of the cell cycle, stress response, ribosome biogenesis and in those bacteria that undergo differentiation, in morphogenesis control. The polypeptide is GTPase Obg (Legionella pneumophila (strain Lens)).